Consider the following 293-residue polypeptide: Pyridoxal 5'-phosphate synthase subunit PdxS (293 aa).

D25 is a D-ribose 5-phosphate binding site. K82 serves as the catalytic Schiff-base intermediate with D-ribose 5-phosphate. A D-ribose 5-phosphate-binding site is contributed by G154. R166 is a binding site for D-glyceraldehyde 3-phosphate. Residues G215 and 236-237 (GS) contribute to the D-ribose 5-phosphate site.

The protein belongs to the PdxS/SNZ family. In the presence of PdxT, forms a dodecamer of heterodimers.

It carries out the reaction aldehydo-D-ribose 5-phosphate + D-glyceraldehyde 3-phosphate + L-glutamine = pyridoxal 5'-phosphate + L-glutamate + phosphate + 3 H2O + H(+). Its pathway is cofactor biosynthesis; pyridoxal 5'-phosphate biosynthesis. Catalyzes the formation of pyridoxal 5'-phosphate from ribose 5-phosphate (RBP), glyceraldehyde 3-phosphate (G3P) and ammonia. The ammonia is provided by the PdxT subunit. Can also use ribulose 5-phosphate and dihydroxyacetone phosphate as substrates, resulting from enzyme-catalyzed isomerization of RBP and G3P, respectively. This Thermotoga petrophila (strain ATCC BAA-488 / DSM 13995 / JCM 10881 / RKU-1) protein is Pyridoxal 5'-phosphate synthase subunit PdxS.